Consider the following 372-residue polypeptide: Chaperone protein DnaJ (372 aa).

The 66-residue stretch at 5–70 folds into the J domain; the sequence is DYYDVLGVER…QKRANYDQYG (66 aa). The CR-type zinc-finger motif lies at 130–208; the sequence is GTTKDIQINT…CHGDGRVHKK (79 aa). Residues cysteine 143, cysteine 146, cysteine 160, cysteine 163, cysteine 182, cysteine 185, cysteine 196, and cysteine 199 each contribute to the Zn(2+) site. 4 CXXCXGXG motif repeats span residues 143–150, 160–167, 182–189, and 196–203; these read CDSCDGSG, CSTCHGAG, CPSCHGSG, and CKSCHGDG.

Belongs to the DnaJ family. In terms of assembly, homodimer. It depends on Zn(2+) as a cofactor.

Its subcellular location is the cytoplasm. Its function is as follows. Participates actively in the response to hyperosmotic and heat shock by preventing the aggregation of stress-denatured proteins and by disaggregating proteins, also in an autonomous, DnaK-independent fashion. Unfolded proteins bind initially to DnaJ; upon interaction with the DnaJ-bound protein, DnaK hydrolyzes its bound ATP, resulting in the formation of a stable complex. GrpE releases ADP from DnaK; ATP binding to DnaK triggers the release of the substrate protein, thus completing the reaction cycle. Several rounds of ATP-dependent interactions between DnaJ, DnaK and GrpE are required for fully efficient folding. Also involved, together with DnaK and GrpE, in the DNA replication of plasmids through activation of initiation proteins. The polypeptide is Chaperone protein DnaJ (Pasteurella multocida (strain Pm70)).